Reading from the N-terminus, the 174-residue chain is Large ribosomal subunit protein uL13 (174 aa).

2 disordered regions span residues 1-22 and 153-174; these read MAFP…AKSP and GETH…LEVK.

It belongs to the universal ribosomal protein uL13 family. As to quaternary structure, part of the 50S ribosomal subunit. Contacts proteins L3 and L20.

Its function is as follows. This protein is one of the early assembly proteins of the 50S ribosomal subunit. Binds to the 23S rRNA. This chain is Large ribosomal subunit protein uL13 (rplM), found in Deinococcus radiodurans (strain ATCC 13939 / DSM 20539 / JCM 16871 / CCUG 27074 / LMG 4051 / NBRC 15346 / NCIMB 9279 / VKM B-1422 / R1).